A 251-amino-acid polypeptide reads, in one-letter code: CDP-diacylglycerol pyrophosphatase (251 aa).

A helical transmembrane segment spans residues 4–24 (AGLLFLVMIVIAVVAAGIGYW).

It belongs to the Cdh family.

Its subcellular location is the cell inner membrane. It catalyses the reaction a CDP-1,2-diacyl-sn-glycerol + H2O = a 1,2-diacyl-sn-glycero-3-phosphate + CMP + 2 H(+). The protein operates within phospholipid metabolism; CDP-diacylglycerol degradation; phosphatidate from CDP-diacylglycerol: step 1/1. The polypeptide is CDP-diacylglycerol pyrophosphatase (Escherichia coli (strain K12 / MC4100 / BW2952)).